A 519-amino-acid chain; its full sequence is Tachykinin-like peptides receptor 99D (519 aa).

The Extracellular segment spans residues 1 to 100; the sequence is MENRSDFEAD…SFAFVVPWWR (100 aa). N-linked (GlcNAc...) asparagine glycans are attached at residues asparagine 3, asparagine 19, asparagine 22, and asparagine 61. The chain crosses the membrane as a helical span at residues 101-123; the sequence is QVLWSILFGGMVIVATGGNLIVV. The Cytoplasmic portion of the chain corresponds to 124–134; the sequence is WIVMTTKRMRT. The chain crosses the membrane as a helical span at residues 135–155; it reads VTNYFIVNLSIADAMVSSLNV. The Extracellular segment spans residues 156 to 175; it reads TFNYYYMLDSDWPFGEFYCK. Cysteines 174 and 254 form a disulfide. A helical transmembrane segment spans residues 176–197; it reads LSQFIAMLSICASVFTLMAISI. Residues 198 to 217 lie on the Cytoplasmic side of the membrane; the sequence is DRYVAIIRPLQPRMSKRCNL. A helical transmembrane segment spans residues 218–238; it reads AIAAVIWLASTLISCPMMIIY. Over 239-270 the chain is Extracellular; the sequence is RTEEVPVRGLSNRTVCYPEWPDGPTNHSTMES. The helical transmembrane segment at 271 to 292 threads the bilayer; it reads LYNILIIILTYFLPIVSMTVTY. At 293–324 the chain is on the cytoplasmic side; the sequence is SRVGIELWGSKTIGECTPRQVENVRSKRRVVK. Residues 325-346 form a helical membrane-spanning segment; sequence MMIVVVLIFAICWLPFHSYFII. Residues 347–361 are Extracellular-facing; the sequence is TSCYPAITEAPFIQE. A helical transmembrane segment spans residues 362–384; it reads LYLAIYWLAMSNSMYNPIIYCWM. At 385–519 the chain is on the cytoplasmic side; it reads NSRFRYGFKM…STANTTQLLS (135 aa). Cysteine 399 carries S-palmitoyl cysteine lipidation. The disordered stretch occupies residues 444 to 519; it reads PSSPKSHRIS…STANTTQLLS (76 aa). Polar residues-rich tracts occupy residues 454-465 and 487-499; these read HSGTGRSATLRN and SYQQ…WSGP. Positions 500-519 are enriched in low complexity; that stretch reads NSATAVTNSSSTANTTQLLS.

Belongs to the G-protein coupled receptor 1 family. In terms of tissue distribution, during late embryogenesis (stages 11-15), expressed in the brain and in a specific subset of neurons in each neuromere of the developing ventral ganglion. Expressed in the cortex of the adult brain, which contains the neuronal cell bodies.

The protein resides in the cell membrane. Receptor for tachykinin-like peptides. This chain is Tachykinin-like peptides receptor 99D (TkR99D), found in Drosophila melanogaster (Fruit fly).